A 34-amino-acid polypeptide reads, in one-letter code: Beta/mu-theraphotoxin-Pe1a (34 aa).

3 cysteine pairs are disulfide-bonded: C2–C16, C9–C21, and C15–C28.

It belongs to the neurotoxin 10 (Hwtx-1) family. 54 (ProTx-1) subfamily. In terms of tissue distribution, expressed by the venom gland.

The protein localises to the secreted. Its function is as follows. Ion channel impairing toxin that inhibits voltage-gated sodium channels. The recombinantly expressed toxin shows a weak activity against Nav1.7/SCN9A (25% inhibition at 10 uM), and shifts the voltage dependence of channel activation to more depolarized potentials. This is Beta/mu-theraphotoxin-Pe1a from Phormingochilus everetti (Malaysian purple earth tiger tarantula).